We begin with the raw amino-acid sequence, 166 residues long: Ribosome-binding factor A (166 aa).

Residues 122–166 (HVADETDVEDSTDHEDDVTNSEDETKHVDIDTDSEEGTNTDGKAQ) are disordered. The segment covering 126–143 (ETDVEDSTDHEDDVTNSE) has biased composition (acidic residues).

This sequence belongs to the RbfA family. In terms of assembly, monomer. Binds 30S ribosomal subunits, but not 50S ribosomal subunits or 70S ribosomes.

The protein localises to the cytoplasm. Its function is as follows. One of several proteins that assist in the late maturation steps of the functional core of the 30S ribosomal subunit. Associates with free 30S ribosomal subunits (but not with 30S subunits that are part of 70S ribosomes or polysomes). Required for efficient processing of 16S rRNA. May interact with the 5'-terminal helix region of 16S rRNA. The sequence is that of Ribosome-binding factor A from Pseudoalteromonas translucida (strain TAC 125).